A 169-amino-acid polypeptide reads, in one-letter code: tRNA (cytidine(56)-2'-O)-methyltransferase (169 aa).

S-adenosyl-L-methionine-binding positions include Leu-77, 103 to 107 (GSEKV), and 121 to 128 (IGNQPHSE).

Belongs to the aTrm56 family. In terms of assembly, homodimer.

The protein resides in the cytoplasm. The enzyme catalyses cytidine(56) in tRNA + S-adenosyl-L-methionine = 2'-O-methylcytidine(56) in tRNA + S-adenosyl-L-homocysteine + H(+). Its function is as follows. Specifically catalyzes the AdoMet-dependent 2'-O-ribose methylation of cytidine at position 56 in tRNAs. This chain is tRNA (cytidine(56)-2'-O)-methyltransferase, found in Sulfurisphaera tokodaii (strain DSM 16993 / JCM 10545 / NBRC 100140 / 7) (Sulfolobus tokodaii).